A 206-amino-acid chain; its full sequence is Endoplasmic reticulum transmembrane protein YET-like (206 aa).

Residues 1–2 (ME) are Lumenal-facing. The helical transmembrane segment at 3–23 (FLMTLVFLVLLVEIVFCTFFM) threads the bilayer. At 24–46 (LPVSMHLRKNVYNKLDKLFGGQN) the chain is on the cytoplasmic side. Residues 47–67 (AKIFLKVLALLVIIVFCDSIV) traverse the membrane as a helical segment. At 68 to 101 (NSYNINKKLHTPELTGAKFDRQNEYTRMFRYQRN) the chain is on the lumenal side. A helical transmembrane segment spans residues 102 to 122 (SYICGFCLYLFFLIYRSQGII). The Cytoplasmic segment spans residues 123–206 (SQLSNVEASK…KKPKTQKKDD (84 aa)). Residues 140-198 (KNNLNTVETLLSENEKLKTEIKDLKKMEKEHKAMKSQAENTTKEYLKLQEEYNQLLGKK) are a coiled coil. The short motif at 203–206 (KKDD) is the Di-lysine motif element.

Belongs to the BCAP29/BCAP31 family.

The protein resides in the endoplasmic reticulum membrane. Its function is as follows. May play a role in anterograde transport of membrane proteins from the endoplasmic reticulum to the Golgi. The sequence is that of Endoplasmic reticulum transmembrane protein YET-like from Dictyostelium discoideum (Social amoeba).